The primary structure comprises 254 residues: CRISPR-associated endonuclease Cas1 (254 aa).

Mn(2+) is bound by residues glutamate 78, histidine 146, and glutamate 161.

This sequence belongs to the CRISPR-associated endonuclease Cas1 family. In terms of assembly, homodimer, forms a heterotetramer with a Cas2 homodimer. Mg(2+) serves as cofactor. Mn(2+) is required as a cofactor.

Functionally, CRISPR (clustered regularly interspaced short palindromic repeat), is an adaptive immune system that provides protection against mobile genetic elements (viruses, transposable elements and conjugative plasmids). CRISPR clusters contain spacers, sequences complementary to antecedent mobile elements, and target invading nucleic acids. CRISPR clusters are transcribed and processed into CRISPR RNA (crRNA). Acts as a dsDNA endonuclease. Involved in the integration of spacer DNA into the CRISPR cassette. In Leptospira interrogans serogroup Icterohaemorrhagiae serovar Lai (strain 56601), this protein is CRISPR-associated endonuclease Cas1.